The sequence spans 650 residues: Probable ATP-dependent RNA helicase DDX17 (650 aa).

Residues 1–38 (MRGGGFGDRDRDRDRGGFGARGGSGLPPKKFGNPGERL) form a disordered region. The segment covering 7 to 16 (GDRDRDRDRG) has biased composition (basic and acidic residues). Residues Lys29, Lys30, and Lys42 each carry the N6-acetyllysine modification. Residue Lys50 forms a Glycyl lysine isopeptide (Lys-Gly) (interchain with G-Cter in SUMO); alternate linkage. Residue Lys50 forms a Glycyl lysine isopeptide (Lys-Gly) (interchain with G-Cter in SUMO1); alternate linkage. A Glycyl lysine isopeptide (Lys-Gly) (interchain with G-Cter in SUMO2); alternate cross-link involves residue Lys50. The Q motif motif lies at 92-120 (FAFHHANFPQYVMDVLMDQHFTEPTPIQC). Residues 123 to 298 (FPLALSGRDM…EDFLRDYTQI (176 aa)) enclose the Helicase ATP-binding domain. ATP is bound at residue 136–143 (AQTGSGKT). The short motif at 246–249 (DEAD) is the DEAD box element. Residues 326-473 (KLIQLMEEIM…AINPKLMQLV (148 aa)) form the Helicase C-terminal domain. At Thr444 the chain carries Phosphothreonine. Lys449 participates in a covalent cross-link: Glycyl lysine isopeptide (Lys-Gly) (interchain with G-Cter in SUMO2). Positions 468–650 (KLMQLVDHRG…PPPPPPPSRK (183 aa)) are transactivation domain. Disordered regions lie at residues 472–543 (LVDH…YGSP) and 583–650 (ASST…PSRK). Positions 489 to 499 (RTTSSANNPNL) are enriched in polar residues. Positions 504 to 531 (ECDRRLRGVKDGGRRDSTSYRDRSETDR) are enriched in basic and acidic residues. Residues 583–609 (ASSTASAGRSSQSSSQQFSGIGRSGQQ) show a composition bias toward low complexity. Omega-N-methylarginine is present on Arg605. Polar residues predominate over residues 610 to 619 (PQPLMSQQFA). The segment covering 638–650 (YPPPPPPPPPSRK) has biased composition (pro residues). The interval 639–647 (PPPPPPPPP) is interaction with YAP1.

It belongs to the DEAD box helicase family. DDX5/DBP2 subfamily. In terms of assembly, interacts with DDX5 in an RNA-independent manner. Interacts with CDK9 transcription elongation complex under basal conditions. Following cell stimulation with poly(I:C), a synthetic double-stranded RNA mimicking viral infection, the interaction with CDK9 is decreased. Interacts with ESR1 in an estrogen-independent manner. Interacts with HNRNPH1; this interaction is important for the regulation of alternative splicing on G-quadruplex structures. At high, but not low, cell density, interacts with DROSHA and DGCR8, the core components of the microprocessor complex involved in the maturation of primary microRNAs (pri-miRNAs) into pre-miRNAs. The interaction with DGCR8 is reduced during mitosis. At low, but not high, cell density, interacts with YAP1 and with its paralog, WWTR1/TAZ. Interactions with DROSHA and YAP1 are mutually exclusive. In vitro, the pre-miRNA processing activity of the DDX17-containing microprocessor complex is weaker than that of the DROSHA/DGCR8 microprocessor complex. Interacts with UPF3B. Interacts with NFAT5; this interaction leads to DDX17 recruitment to LNC2 and S100A4 promoters and NFAT5-mediated DDX17-enhanced transactivation. Interacts with HDAC1, HDAC2 and HDAC3; this interaction with HDAC1 and HDAC3, but not HDAC2, depends upon DDX17 acetylation. Interacts with ZC3HAV1 (via N-terminal domain) in an RNA-independent manner. Interacts with EXOSC3/RRP40 and EXOSC5/RRP46; this interaction may be indirect and mediated by ZC3HAV1-binding. Interacts with EP300; this interaction leads to acetylation at lysine residues. Interacts with CREBBP/CBP and KAT2B/P/CAF. Directly interacts with CTNNB1. Interacts with MYOD1. Interacts with TP53. Interacts with DCP1A in an RNA-independent manner. Interacts with DCP2 in an RNA-dependent manner. Interacts with DHX36; this interaction occurs in a RNA-dependent manner. Interacts with ERCC6. Post-translationally, sumoylation significantly increases stability. It also promotes interaction specifically with HDAC1 (but not HDAC2, nor HDAC3) and strongly stimulates ESR1 and TP53 coactivation. In terms of processing, acetylation at lysine residues stabilizes the protein, stimulates interaction with HDAC1 and HDAC3, but not HDAC2, and represses ESR1 and TP53 coactivation activity.

It is found in the nucleus. It localises to the nucleolus. Its subcellular location is the cytoplasm. The protein resides in the cytosol. The enzyme catalyses ATP + H2O = ADP + phosphate + H(+). In terms of biological role, as an RNA helicase, unwinds RNA and alters RNA structures through ATP binding and hydrolysis. Involved in multiple cellular processes, including pre-mRNA splicing, alternative splicing, ribosomal RNA processing and miRNA processing, as well as transcription regulation. Regulates the alternative splicing of exons exhibiting specific features. This function requires the RNA helicase activity. Affects NFAT5 and histone macro-H2A.1/MACROH2A1 alternative splicing in a CDK9-dependent manner. Affects splicing of mediators of steroid hormone signaling pathway, including kinases that phosphorylates ESR1 and transcriptional regulators. By acting splicing of regulatory factors, participates in ESR1 and AR stabilization. Promotes the inclusion of specific AC-rich alternative exons in CD44 transcripts. In myoblasts and epithelial cells, cooperates with HNRNPH1 to control the splicing of specific subsets of exons. In addition to binding mature mRNAs, also interacts with certain pri-microRNAs, including MIR132/miR-132, and stabilizes the primary transcript. Also participates in the MIR132 processing, resulting in significantly higher levels of mature MIR132 than MIR212 despite the fact that both are cotranscribed and co-regulated. Binding of pri-microRNAs may occur on the 3' segment flanking the stem loop via the 5'-[ACG]CAUC[ACU]-3' consensus sequence. Participates in MYC down-regulation at high cell density through the production of MYC-targeting microRNAs. Along with DDX5, may be involved in the processing of the 32S intermediate into the mature 28S rRNA. Promoter-specific transcription regulator, functioning as a coactivator or corepressor depending on the context of the promoter and the transcriptional complex in which it exists. Enhances NFAT5 transcriptional activity. Synergizes with TP53 in the activation of the MDM2 promoter; this activity requires acetylation on lysine residues. May also coactivate MDM2 transcription through a TP53-independent pathway. Coactivates MMP7 transcription. Along with CTNNB1, coactivates MYC, JUN, FOSL1 and cyclin D1/CCND1 transcription. Alone or in combination with DDX5 and/or SRA1 non-coding RNA, plays a critical role in promoting the assembly of proteins required for the formation of the transcription initiation complex and chromatin remodeling leading to coactivation of MYOD1-dependent transcription. This helicase-independent activity is required for skeletal muscle cells to properly differentiate into myotubes. During epithelial-to-mesenchymal transition, coregulates SMAD-dependent transcriptional activity, directly controlling key effectors of differentiation, including miRNAs which in turn directly repress its expression. Plays a role in estrogen and testosterone signaling pathway at several levels. Mediates the use of alternative promoters in estrogen-responsive genes and regulates transcription and splicing of a large number of steroid hormone target genes. Contrary to the splicing regulation activity, transcriptional coregulation of the estrogen receptor ESR1 is helicase activity-independent. Plays a role in innate immunity. Specifically restricts bunyavirus infection, including Rift Valley fever virus (RVFV) or La Crosse virus (LACV), but not vesicular stomatitis virus (VSV), in an interferon- and DROSHA-independent manner. Binds to RVFV RNA, likely via structured viral RNA elements. Promotes mRNA degradation mediated by the antiviral zinc-finger protein ZC3HAV1, in an ATPase-dependent manner. The protein is Probable ATP-dependent RNA helicase DDX17 (Ddx17) of Mus musculus (Mouse).